A 355-amino-acid polypeptide reads, in one-letter code: Dihydroorotate dehydrogenase (quinone) (355 aa).

Residues 68-72 (AGFDK) and Thr-92 each bind FMN. Residue Lys-72 coordinates substrate. Position 117–121 (117–121 (NRMGF)) interacts with substrate. Positions 154 and 190 each coordinate FMN. Asn-190 is a binding site for substrate. Catalysis depends on Ser-193, which acts as the Nucleophile. Substrate is bound at residue Asn-195. FMN contacts are provided by Lys-232 and Thr-260. Substrate is bound at residue 261–262 (NT). FMN is bound by residues Gly-286, Gly-315, and 336 to 337 (YS).

It belongs to the dihydroorotate dehydrogenase family. Type 2 subfamily. Monomer. FMN is required as a cofactor.

The protein resides in the cell membrane. The catalysed reaction is (S)-dihydroorotate + a quinone = orotate + a quinol. Its pathway is pyrimidine metabolism; UMP biosynthesis via de novo pathway; orotate from (S)-dihydroorotate (quinone route): step 1/1. Functionally, catalyzes the conversion of dihydroorotate to orotate with quinone as electron acceptor. The chain is Dihydroorotate dehydrogenase (quinone) from Nocardioides sp. (strain ATCC BAA-499 / JS614).